A 414-amino-acid polypeptide reads, in one-letter code: MELSSVSSFSLGTNPFISIPHNNNNNLKVSSYCCKSKSRVINSTNSKHCSPNNNNNNNTSNKTTHLLGLYGQSRCLLKPLSIFSCKDQRGNSIRASAQIEDRPPESGNLSALTNVKDFVSVCWEYVRPYTAKGVIICSSCLFGRELLENPNLFSWPLIFRALLGMLAILGSCFYTAGINQIFDMDIDRINKPDLPLVSGRISVESAWLLTLSPAIIGFILILKLNSGPLLTSLYCLAILSGTIYSVPPFRWKKNPITAFLCILMIHAGLNFSVYYASRAALGLAFVWSPSFSFITAFITFMTLTLASSKDLSDINGDRKFGVETFATKLGAKNITLLGTGLLLLNYVAAISTAIIWPKAFKSNIMLLSHAILAFSLFFQARELDRTNYTPEACKSFYEFIWILFSAEYVVYLFI.

The transit peptide at 1-86 (MELSSVSSFS…LKPLSIFSCK (86 aa)) directs the protein to the chloroplast. The next 8 membrane-spanning stretches (helical) occupy residues 153–173 (FSWPLIFRALLGMLAILGSCF), 201–221 (ISVESAWLLTLSPAIIGFILI), 229–249 (LLTSLYCLAILSGTIYSVPPF), 256–276 (ITAFLCILMIHAGLNFSVYYA), 281–301 (LGLAFVWSPSFSFITAFITFM), 336–356 (LLGTGLLLLNYVAAISTAIIW), 359–379 (AFKSNIMLLSHAILAFSLFFQ), and 394–414 (KSFYEFIWILFSAEYVVYLFI).

It belongs to the UbiA prenyltransferase family. Component an active demethylxanthohumol (DMX) biosynthetic metabolon in glandular trichomes (lupulin glands) that encompasses a chalcone synthase (CHS) and a membrane-bound prenyltransferase. Interacts with PT2, forming a functional metabolon. Interacts with CHIL2; this interaction promotes catalytic activity. Requires Mg(2+) as cofactor. As to expression, expressed in trichomes.

It is found in the plastid. Its subcellular location is the chloroplast membrane. The enzyme catalyses 2',4,4',6'-tetrahydroxychalcone + dimethylallyl diphosphate = desmethylxanthohumol + diphosphate. It carries out the reaction a 2-acylphloroglucinol + dimethylallyl diphosphate = a 2-acyl-4-prenylphloroglucinol + diphosphate. It participates in secondary metabolite biosynthesis. Stimulated by CHIL2 but inhibited by CHIL1. Functionally, involved in the biosynthesis of prenylated phenolics natural products which contribute to the bitter taste of beer and display broad biological activities. Catalyzes the first prenylation step in the beta-bitter acid pathway. Uses dimethylallyl diphosphate (DMAPP) as the prenyl donor. The polypeptide is 2-acylphloroglucinol 4-prenyltransferase (Humulus lupulus (European hop)).